A 245-amino-acid polypeptide reads, in one-letter code: Outer membrane protein assembly factor BamD (245 aa).

The signal sequence occupies residues 1–19 (MTRMKYLVAAATLSLFLAG). Cysteine 20 carries the N-palmitoyl cysteine lipid modification. Cysteine 20 carries S-diacylglycerol cysteine lipidation.

The protein belongs to the BamD family. In terms of assembly, part of the Bam complex, which is composed of the outer membrane protein BamA, and four lipoproteins BamB, BamC, BamD and BamE.

It localises to the cell outer membrane. In terms of biological role, part of the outer membrane protein assembly complex, which is involved in assembly and insertion of beta-barrel proteins into the outer membrane. Constitutes, with BamA, the core component of the assembly machinery. The sequence is that of Outer membrane protein assembly factor BamD from Escherichia coli O157:H7.